The primary structure comprises 804 residues: Pentatricopeptide repeat-containing protein At4g35130, chloroplastic (804 aa).

Residues Met-1–Lys-19 constitute a chloroplast transit peptide. PPR repeat units lie at residues Asn-63–Ala-93, Asp-94–Ala-128, Asp-129–Ser-163, Asp-164–Arg-194, Asp-195–Pro-229, Asp-230–Thr-264, Asp-266–Arg-296, Asn-297–Pro-332, Asp-333–Pro-363, His-364–Lys-394, Asn-395–Pro-429, Asp-430–Ser-464, Asn-465–Lys-495, Asp-496–Pro-530, Asn-531–Glu-561, and Gly-567–Val-597. Positions Ile-602–Lys-677 are type E motif. Positions Gly-678 to Gly-708 are type E(+) motif. Residues Glu-710–Trp-804 are type DYW motif.

The protein belongs to the PPR family. PCMP-H subfamily.

It localises to the plastid. The protein localises to the chloroplast. In Arabidopsis thaliana (Mouse-ear cress), this protein is Pentatricopeptide repeat-containing protein At4g35130, chloroplastic (PCMP-H27).